Reading from the N-terminus, the 386-residue chain is Patatin-16 (386 aa).

The signal sequence occupies residues 1 to 23 (MATTKSFLILIVMILATTSSTFA). The PNPLA domain occupies 32 to 229 (LSIDGGGIKG…TVADPALLSV (198 aa)). The short motif at 36 to 41 (GGGIKG) is the GXGXXG element. Residues 75–79 (GTSTG) carry the GXSXG motif. Ser-77 acts as the Nucleophile in catalysis. N-linked (GlcNAc...) asparagine glycosylation is present at Asn-115. Asp-215 serves as the catalytic Proton acceptor. A DGA/G motif is present at residues 215–217 (DGA). The stretch at 360–384 (ETYEEALKRFAKLLSDRKKLRANKA) forms a coiled coil.

Belongs to the patatin family.

It is found in the vacuole. Probable lipolytic acyl hydrolase (LAH), an activity which is thought to be involved in the response of tubers to pathogens. The sequence is that of Patatin-16 from Solanum tuberosum (Potato).